Consider the following 629-residue polypeptide: tRNA uridine 5-carboxymethylaminomethyl modification enzyme MnmG (629 aa).

FAD-binding positions include 13–18 (GGGHAG), valine 125, and serine 180. 273-287 (GPRYCPSIEDKVMRF) serves as a coordination point for NAD(+). Residue glutamine 370 participates in FAD binding.

Belongs to the MnmG family. In terms of assembly, homodimer. Heterotetramer of two MnmE and two MnmG subunits. The cofactor is FAD.

Its subcellular location is the cytoplasm. Functionally, NAD-binding protein involved in the addition of a carboxymethylaminomethyl (cmnm) group at the wobble position (U34) of certain tRNAs, forming tRNA-cmnm(5)s(2)U34. The chain is tRNA uridine 5-carboxymethylaminomethyl modification enzyme MnmG from Salmonella paratyphi C (strain RKS4594).